Here is a 401-residue protein sequence, read N- to C-terminus: Beta-ketoadipyl-CoA thiolase (401 aa).

Cysteine 90 acts as the Acyl-thioester intermediate in catalysis. Catalysis depends on proton acceptor residues histidine 357 and cysteine 387.

Belongs to the thiolase-like superfamily. Thiolase family.

The catalysed reaction is succinyl-CoA + acetyl-CoA = 3-oxoadipyl-CoA + CoA. It participates in aromatic compound metabolism; beta-ketoadipate pathway; acetyl-CoA and succinyl-CoA from 3-oxoadipate: step 2/2. Catalyzes thiolytic cleavage of beta-ketoadipyl-CoA to succinyl-CoA and acetyl-CoA. This is Beta-ketoadipyl-CoA thiolase (catF) from Acinetobacter baylyi (strain ATCC 33305 / BD413 / ADP1).